A 117-amino-acid polypeptide reads, in one-letter code: uncharacterized protein (117 aa).

The protein belongs to the mimivirus R69 family.

This is an uncharacterized protein from Acanthamoeba polyphaga mimivirus (APMV).